A 291-amino-acid chain; its full sequence is Probable 2-(5''-triphosphoribosyl)-3'-dephosphocoenzyme-A synthase (291 aa).

This sequence belongs to the CitG/MdcB family.

The catalysed reaction is 3'-dephospho-CoA + ATP = 2'-(5''-triphospho-alpha-D-ribosyl)-3'-dephospho-CoA + adenine. In terms of biological role, involved in the formation of 2-(5''-phosphoribosyl)-3'-dephosphocoenzyme-A, the prosthetic group of the acyl-carrier protein of the malonate decarboxylase. This Pseudomonas syringae pv. syringae (strain B728a) protein is Probable 2-(5''-triphosphoribosyl)-3'-dephosphocoenzyme-A synthase.